The chain runs to 151 residues: 3-hydroxyacyl-[acyl-carrier-protein] dehydratase FabZ (151 aa).

His53 is a catalytic residue.

Belongs to the thioester dehydratase family. FabZ subfamily.

The protein resides in the cytoplasm. The catalysed reaction is a (3R)-hydroxyacyl-[ACP] = a (2E)-enoyl-[ACP] + H2O. In terms of biological role, involved in unsaturated fatty acids biosynthesis. Catalyzes the dehydration of short chain beta-hydroxyacyl-ACPs and long chain saturated and unsaturated beta-hydroxyacyl-ACPs. This chain is 3-hydroxyacyl-[acyl-carrier-protein] dehydratase FabZ, found in Erythrobacter litoralis (strain HTCC2594).